Consider the following 225-residue polypeptide: Glutathione S-transferase U3 (225 aa).

A GST N-terminal domain is found at 6-86; that stretch reads EGVKLIGSWA…YIDQTWTNNP (81 aa). Glutathione contacts are provided by residues 16-17, 43-44, 57-58, and 70-71; these read SP, VK, KV, and ES. A GST C-terminal domain is found at 91–218; the sequence is SPYDKAMARF…EKHIEHMMKI (128 aa). Position 152 is a phosphothreonine (T152).

Belongs to the GST superfamily. Tau family.

Its subcellular location is the cytoplasm. It localises to the cytosol. It catalyses the reaction RX + glutathione = an S-substituted glutathione + a halide anion + H(+). May be involved in the conjugation of reduced glutathione to a wide number of exogenous and endogenous hydrophobic electrophiles and have a detoxification role against certain herbicides. The chain is Glutathione S-transferase U3 (GSTU3) from Arabidopsis thaliana (Mouse-ear cress).